The sequence spans 72 residues: ATP synthase subunit L (72 aa).

As to quaternary structure, F-type ATP synthases have 2 components, the catalytic core F(1) and the membrane-embedded component F(0), linked together by a central stalk and a peripheral stalk. The central stalk, also called rotor shaft, is often seen as part of F(1). The peripheral stalk is seen as part of F(0). F(0) contains the membrane channel next to the rotor. F-type ATP synthases form dimers but each monomer functions independently in ATP generation. The dimer consists of 18 different polypeptides: ATP1 (subunit alpha, part of F(1), 3 molecules per monomer), ATP2 (subunit beta, part of F(1), 3 molecules per monomer), ATP3 (subunit gamma, part of the central stalk), ATP4 (subunit b, part of the peripheral stalk), ATP5/OSCP (subunit 5/OSCP, part of the peripheral stalk), ATP6 (subunit a, part of the peripheral stalk), ATP7 (subunit d, part of the peripheral stalk), ATP8 (subunit 8, part of the peripheral stalk), OLI1 (subunit c, part of the rotor, 10 molecules per monomer), ATP14 (subunit h, part of the peripheral stalk), ATP15 (subunit epsilon, part of the central stalk), ATP16 (subunit delta, part of the central stalk), ATP17 (subunit f, part of the peripheral stalk), ATP18 (subunit i/j, part of the peripheral stalk). Dimer-specific subunits are ATP19 (subunit k, at interface between monomers), ATP20 (subunit g, at interface between monomers), TIM11 (subunit e, at interface between monomers). Also contains subunit L.

The protein localises to the mitochondrion inner membrane. Functionally, mitochondrial membrane ATP synthase (F(1)F(0) ATP synthase or Complex V) produces ATP from ADP in the presence of a proton gradient across the membrane which is generated by electron transport complexes of the respiratory chain. F-type ATP synthases consist of two structural domains, F(1) - containing the extramembraneous catalytic core, and F(0) - containing the membrane proton channel, linked together by a central stalk and a peripheral stalk. During catalysis, ATP synthesis in the catalytic domain of F(1) is coupled via a rotary mechanism of the central stalk subunits to proton translocation. This Pichia angusta (Yeast) protein is ATP synthase subunit L.